Consider the following 524-residue polypeptide: Ribonuclease Y (524 aa).

The chain crosses the membrane as a helical span at residues 3-23; it reads IVINLFLLVPASIVFFAAGFF. A disordered region spans residues 96–127; it reads QQREGQLKKQAQDNRDMERRLQDQRKENEQVQ. The segment covering 100-124 has biased composition (basic and acidic residues); the sequence is GQLKKQAQDNRDMERRLQDQRKENE. The 67-residue stretch at 214-280 folds into the KH domain; sequence ALSVVHIQTD…KLTLQKLLSE (67 aa). Residues 340–432 form the HD domain; sequence LLQHSREVAM…VDAANVISLS (93 aa).

Belongs to the RNase Y family.

It is found in the cell membrane. In terms of biological role, endoribonuclease that initiates mRNA decay. The sequence is that of Ribonuclease Y from Chlorobium phaeovibrioides (strain DSM 265 / 1930) (Prosthecochloris vibrioformis (strain DSM 265)).